A 263-amino-acid polypeptide reads, in one-letter code: Putative TATA-binding protein pB263R (263 aa).

Belongs to the asfivirus B263R family.

Functionally, putative TATA-binding protein. In African swine fever virus (isolate Tick/Malawi/Lil 20-1/1983) (ASFV), this protein is Putative TATA-binding protein pB263R.